A 663-amino-acid chain; its full sequence is UvrABC system protein B (663 aa).

Positions 1–10 are enriched in basic and acidic residues; the sequence is MIDKRDDKPF. Positions 1 to 23 are disordered; sequence MIDKRDDKPFKLKSKYKPSGDQP. Residues 31–418 enclose the Helicase ATP-binding domain; the sequence is DNIEGGEKAQ…TNTIIEQIIR (388 aa). 44–51 contacts ATP; sequence GATGTGKT. The Beta-hairpin signature appears at 97 to 120; that stretch reads YYDYYQPEAYVPSSDTYIEKDSSV. The Helicase C-terminal domain maps to 435 to 601; it reads QMDDLLGEIN…TIKKDIRGLI (167 aa). The 36-residue stretch at 627–662 folds into the UVR domain; that stretch reads KEAINALQKQMQEAAELLDFELAAQMRDLILELKLM.

Belongs to the UvrB family. As to quaternary structure, forms a heterotetramer with UvrA during the search for lesions. Interacts with UvrC in an incision complex.

The protein localises to the cytoplasm. Its function is as follows. The UvrABC repair system catalyzes the recognition and processing of DNA lesions. A damage recognition complex composed of 2 UvrA and 2 UvrB subunits scans DNA for abnormalities. Upon binding of the UvrA(2)B(2) complex to a putative damaged site, the DNA wraps around one UvrB monomer. DNA wrap is dependent on ATP binding by UvrB and probably causes local melting of the DNA helix, facilitating insertion of UvrB beta-hairpin between the DNA strands. Then UvrB probes one DNA strand for the presence of a lesion. If a lesion is found the UvrA subunits dissociate and the UvrB-DNA preincision complex is formed. This complex is subsequently bound by UvrC and the second UvrB is released. If no lesion is found, the DNA wraps around the other UvrB subunit that will check the other stand for damage. In Streptococcus pyogenes serotype M3 (strain ATCC BAA-595 / MGAS315), this protein is UvrABC system protein B.